A 129-amino-acid polypeptide reads, in one-letter code: Large ribosomal subunit protein bL12 (129 aa).

Belongs to the bacterial ribosomal protein bL12 family. Homodimer. Part of the ribosomal stalk of the 50S ribosomal subunit. Forms a multimeric L10(L12)X complex, where L10 forms an elongated spine to which 2 to 4 L12 dimers bind in a sequential fashion. Binds GTP-bound translation factors.

In terms of biological role, forms part of the ribosomal stalk which helps the ribosome interact with GTP-bound translation factors. Is thus essential for accurate translation. The protein is Large ribosomal subunit protein bL12 of Mycobacteroides abscessus (strain ATCC 19977 / DSM 44196 / CCUG 20993 / CIP 104536 / JCM 13569 / NCTC 13031 / TMC 1543 / L948) (Mycobacterium abscessus).